The chain runs to 343 residues: Twinfilin (343 aa).

ADF-H domains are found at residues 11–135 and 184–312; these read EQLA…EGYR and EATV…DELH. A disordered region spans residues 319 to 343; it reads RPAFAKPKGPPNRGAKRLTRPTAED.

The protein belongs to the actin-binding proteins ADF family. Twinfilin subfamily. As to quaternary structure, interacts with G-actin; ADP-actin form.

It is found in the cytoplasm. Its subcellular location is the cytoskeleton. It localises to the cell cortex. Functionally, actin-binding protein involved in motile and morphological processes. Inhibits actin polymerization, likely by sequestering G-actin. This Drosophila melanogaster (Fruit fly) protein is Twinfilin (twf).